The following is a 355-amino-acid chain: UDP-N-acetylglucosamine--N-acetylmuramyl-(pentapeptide) pyrophosphoryl-undecaprenol N-acetylglucosamine transferase (355 aa).

UDP-N-acetyl-alpha-D-glucosamine-binding positions include 15-17, Asn127, Arg163, Ser191, Ile244, 263-268, and Gln288; these read TGG and ALTVSE.

This sequence belongs to the glycosyltransferase 28 family. MurG subfamily.

It localises to the cell inner membrane. The enzyme catalyses di-trans,octa-cis-undecaprenyl diphospho-N-acetyl-alpha-D-muramoyl-L-alanyl-D-glutamyl-meso-2,6-diaminopimeloyl-D-alanyl-D-alanine + UDP-N-acetyl-alpha-D-glucosamine = di-trans,octa-cis-undecaprenyl diphospho-[N-acetyl-alpha-D-glucosaminyl-(1-&gt;4)]-N-acetyl-alpha-D-muramoyl-L-alanyl-D-glutamyl-meso-2,6-diaminopimeloyl-D-alanyl-D-alanine + UDP + H(+). Its pathway is cell wall biogenesis; peptidoglycan biosynthesis. Cell wall formation. Catalyzes the transfer of a GlcNAc subunit on undecaprenyl-pyrophosphoryl-MurNAc-pentapeptide (lipid intermediate I) to form undecaprenyl-pyrophosphoryl-MurNAc-(pentapeptide)GlcNAc (lipid intermediate II). This is UDP-N-acetylglucosamine--N-acetylmuramyl-(pentapeptide) pyrophosphoryl-undecaprenol N-acetylglucosamine transferase from Escherichia coli (strain K12 / MC4100 / BW2952).